The sequence spans 160 residues: Cytochrome b6-f complex subunit 4 (160 aa).

3 helical membrane-spanning segments follow: residues 36–56, 95–115, and 131–151; these read LLYI…GLAV, LLGV…PFLE, and TVFL…AMPI.

The protein belongs to the cytochrome b family. PetD subfamily. The 4 large subunits of the cytochrome b6-f complex are cytochrome b6, subunit IV (17 kDa polypeptide, petD), cytochrome f and the Rieske protein, while the 4 small subunits are petG, petL, petM and petN. The complex functions as a dimer.

The protein localises to the plastid. The protein resides in the chloroplast thylakoid membrane. In terms of biological role, component of the cytochrome b6-f complex, which mediates electron transfer between photosystem II (PSII) and photosystem I (PSI), cyclic electron flow around PSI, and state transitions. This chain is Cytochrome b6-f complex subunit 4, found in Zygnema circumcarinatum (Green alga).